We begin with the raw amino-acid sequence, 641 residues long: Macrolide export ATP-binding/permease protein MacB (641 aa).

The ABC transporter domain maps to Ile2–Lys236. An ATP-binding site is contributed by Gly34–Thr41. 4 helical membrane-spanning segments follow: residues Ile265–Gly285, Ala519–Val539, Met571–Phe591, and Ala604–Phe624.

It belongs to the ABC transporter superfamily. Macrolide exporter (TC 3.A.1.122) family. As to quaternary structure, homodimer.

The protein localises to the cell inner membrane. Functionally, non-canonical ABC transporter that contains transmembrane domains (TMD), which form a pore in the inner membrane, and an ATP-binding domain (NBD), which is responsible for energy generation. Confers resistance against macrolides. This chain is Macrolide export ATP-binding/permease protein MacB, found in Campylobacter jejuni subsp. jejuni serotype O:2 (strain ATCC 700819 / NCTC 11168).